Here is a 497-residue protein sequence, read N- to C-terminus: Casein kinase I isoform delta (497 aa).

2 disordered regions span residues 1 to 58 and 86 to 109; these read MATM…EEMN and PIQQ…HPTQ. Residues 14–34 show a composition bias toward polar residues; it reads WHNNTSTPMDTTEPATNSHNP. Positions 88 to 105 are enriched in low complexity; that stretch reads QQHQQPPLLQQAQPSQIP. Residues 191-458 form the Protein kinase domain; it reads FRLGRKIGSG…YLRNLFRTLF (268 aa). Residues 197-205 and Lys220 contribute to the ATP site; that span reads IGSGSFGDI. The active-site Proton acceptor is Asp310.

Belongs to the protein kinase superfamily. CK1 Ser/Thr protein kinase family. Casein kinase I subfamily. As to quaternary structure, monomer. In terms of tissue distribution, expressed throughout larval development and into the adult stage in both hypodermal seam cells and the hermaphrodite specific neuron.

The protein localises to the cytoplasm. It is found in the nucleus. Its subcellular location is the chromosome. The protein resides in the centromere. It localises to the cell junction. The protein localises to the adherens junction. It carries out the reaction L-seryl-[protein] + ATP = O-phospho-L-seryl-[protein] + ADP + H(+). The enzyme catalyses L-threonyl-[protein] + ATP = O-phospho-L-threonyl-[protein] + ADP + H(+). Its activity is regulated as follows. Exhibits substrate-dependent heparin activation. Essential serine/threonine-protein kinase that regulates diverse cellular growth and survival processes including Wnt signaling, DNA repair and circadian rhythms. Casein kinases are operationally defined by their preferential utilization of acidic proteins. Positively regulates the expression of components of the heterochronic pathway, which regulate developmental timing, such as the transcriptional repressor lin-42 and microRNAs such as let-7. Negatively regulates cell cycle exit and cell fusion to prevent the premature differentiation of hypodermal seam cells into adult cells. Plays a role in regulating axon branching and subsequently, the maturation of the nervous system, most likely by preventing the premature termination of transcripts for proteins such as Ankyrin/unc-44, which are required for maintaining the nervous system. May phosphorylate ssup-72 to promote nervous system maturation. The polypeptide is Casein kinase I isoform delta (Caenorhabditis elegans).